The sequence spans 193 residues: dCTP deaminase (193 aa).

DCTP-binding positions include 110-115 (RSSLAR), Asp-128, 136-138 (VLE), Tyr-171, Lys-178, and Gln-182. Glu-138 serves as the catalytic Proton donor/acceptor. Positions 169–193 (RPYNRRQDAKYRDQQGAVASRIDKD) are disordered.

This sequence belongs to the dCTP deaminase family. In terms of assembly, homotrimer.

It carries out the reaction dCTP + H2O + H(+) = dUTP + NH4(+). It participates in pyrimidine metabolism; dUMP biosynthesis; dUMP from dCTP (dUTP route): step 1/2. Its function is as follows. Catalyzes the deamination of dCTP to dUTP. The protein is dCTP deaminase of Salmonella arizonae (strain ATCC BAA-731 / CDC346-86 / RSK2980).